Here is a 512-residue protein sequence, read N- to C-terminus: Maturase K (512 aa).

Belongs to the intron maturase 2 family. MatK subfamily.

It is found in the plastid. The protein resides in the chloroplast. Functionally, usually encoded in the trnK tRNA gene intron. Probably assists in splicing its own and other chloroplast group II introns. The chain is Maturase K from Lilium regale (Regal lily).